The primary structure comprises 336 residues: UPF0324 membrane protein SP_0034 (336 aa).

A run of 8 helical transmembrane segments spans residues 65–84 (LLQYAVVLLGFGLNISQVFA), 91–113 (PVILSTISIALIIAYLFQRFFAL), 118–140 (ATLVGVGSSICGGSAIAATAPVI), 153–175 (VIFFFNVLAALIFPTLGTWLHLS), 211–233 (SATIVKLTRTLAIIPITLFLSYW), 249–271 (VFPLFILYFILASLLTTLLTSLG), 286–305 (FLIVMAMSAIGLKTNLVAMV), and 312–334 (ILLGAICWIAIILTTLGMQTLIG).

Belongs to the UPF0324 family.

It localises to the cell membrane. The chain is UPF0324 membrane protein SP_0034 from Streptococcus pneumoniae serotype 4 (strain ATCC BAA-334 / TIGR4).